The following is a 172-amino-acid chain: Shikimate kinase (172 aa).

G14–T19 is a binding site for ATP. S18 lines the Mg(2+) pocket. 3 residues coordinate substrate: D36, R60, and G82. Position 120 (R120) interacts with ATP. Substrate is bound at residue R139. Q156 lines the ATP pocket.

This sequence belongs to the shikimate kinase family. In terms of assembly, monomer. Requires Mg(2+) as cofactor.

The protein resides in the cytoplasm. The enzyme catalyses shikimate + ATP = 3-phosphoshikimate + ADP + H(+). It functions in the pathway metabolic intermediate biosynthesis; chorismate biosynthesis; chorismate from D-erythrose 4-phosphate and phosphoenolpyruvate: step 5/7. In terms of biological role, catalyzes the specific phosphorylation of the 3-hydroxyl group of shikimic acid using ATP as a cosubstrate. This is Shikimate kinase from Aliivibrio fischeri (strain ATCC 700601 / ES114) (Vibrio fischeri).